Consider the following 162-residue polypeptide: Large ribosomal subunit protein uL10 (162 aa).

Belongs to the universal ribosomal protein uL10 family. In terms of assembly, part of the ribosomal stalk of the 50S ribosomal subunit. The N-terminus interacts with L11 and the large rRNA to form the base of the stalk. The C-terminus forms an elongated spine to which L12 dimers bind in a sequential fashion forming a multimeric L10(L12)X complex.

Its function is as follows. Forms part of the ribosomal stalk, playing a central role in the interaction of the ribosome with GTP-bound translation factors. This chain is Large ribosomal subunit protein uL10, found in Acholeplasma laidlawii (strain PG-8A).